The primary structure comprises 357 residues: D-alanine--D-alanine ligase A (357 aa).

An ATP-grasp domain is found at 143-348 (KRLLREAGLA…YSKVIDVLIE (206 aa)). 171-226 (AGALGLPFFAKPARQGSSFGVSKVHDRDGFEQAVETALRYDSKALIEEFVDGREIE) contacts ATP. 3 residues coordinate Mg(2+): Asp-302, Glu-315, and Asn-317.

It belongs to the D-alanine--D-alanine ligase family. Mg(2+) serves as cofactor. It depends on Mn(2+) as a cofactor.

Its subcellular location is the cytoplasm. It carries out the reaction 2 D-alanine + ATP = D-alanyl-D-alanine + ADP + phosphate + H(+). The protein operates within cell wall biogenesis; peptidoglycan biosynthesis. Its function is as follows. Cell wall formation. The chain is D-alanine--D-alanine ligase A from Mesorhizobium japonicum (strain LMG 29417 / CECT 9101 / MAFF 303099) (Mesorhizobium loti (strain MAFF 303099)).